The following is a 112-amino-acid chain: Putative iron-sulfur cluster insertion protein ErpA (112 aa).

Residues Cys-40, Cys-104, and Cys-106 each coordinate iron-sulfur cluster.

It belongs to the HesB/IscA family. In terms of assembly, homodimer. Iron-sulfur cluster serves as cofactor.

Its function is as follows. Required for insertion of 4Fe-4S clusters. This Neisseria gonorrhoeae (strain ATCC 700825 / FA 1090) protein is Putative iron-sulfur cluster insertion protein ErpA.